Consider the following 1405-residue polypeptide: DNA-directed RNA polymerase subunit beta' (1405 aa).

The Zn(2+) site is built by Cys-70, Cys-72, Cys-85, and Cys-88. Positions 460, 462, and 464 each coordinate Mg(2+). Zn(2+) is bound by residues Cys-814, Cys-888, Cys-895, and Cys-898.

It belongs to the RNA polymerase beta' chain family. The RNAP catalytic core consists of 2 alpha, 1 beta, 1 beta' and 1 omega subunit. When a sigma factor is associated with the core the holoenzyme is formed, which can initiate transcription. The cofactor is Mg(2+). Zn(2+) is required as a cofactor.

It catalyses the reaction RNA(n) + a ribonucleoside 5'-triphosphate = RNA(n+1) + diphosphate. Functionally, DNA-dependent RNA polymerase catalyzes the transcription of DNA into RNA using the four ribonucleoside triphosphates as substrates. The chain is DNA-directed RNA polymerase subunit beta' from Shewanella sp. (strain MR-7).